Reading from the N-terminus, the 500-residue chain is Lysine--tRNA ligase (500 aa).

Residues Glu-410 and Glu-417 each contribute to the Mg(2+) site.

The protein belongs to the class-II aminoacyl-tRNA synthetase family. As to quaternary structure, homodimer. Mg(2+) is required as a cofactor.

It is found in the cytoplasm. The enzyme catalyses tRNA(Lys) + L-lysine + ATP = L-lysyl-tRNA(Lys) + AMP + diphosphate. This Shewanella piezotolerans (strain WP3 / JCM 13877) protein is Lysine--tRNA ligase.